The following is a 66-amino-acid chain: MPKQKTHRASAKRFKRTGSGGLKRFRAYTSHRFHGKTKKQRRHLRKASMVHSGDFKRIKSMLTRLK.

The span at methionine 1–arginine 16 shows a compositional bias: basic residues. The segment at methionine 1–glycine 21 is disordered.

Belongs to the bacterial ribosomal protein bL35 family.

The polypeptide is Large ribosomal subunit protein bL35 (Streptococcus mutans serotype c (strain ATCC 700610 / UA159)).